A 1133-amino-acid polypeptide reads, in one-letter code: Eukaryotic translation initiation factor 3 subunit A (1133 aa).

Positions 317–498 (IQRMTSHVLI…HCVHFGTDLS (182 aa)) constitute a PCI domain. Coiled coils occupy residues 573-700 (KKIE…YFER) and 784-886 (EEER…EADS). Residues 810 to 893 (KEEERRRAEE…ADSWRDRRGG (84 aa)) are compositionally biased toward basic and acidic residues. The segment at 810–1133 (KEEERRRAEE…DGWTDVKHHR (324 aa)) is disordered. Low complexity predominate over residues 895 to 909 (APAAAAQPNPAAQEA). 3 stretches are compositionally biased toward basic and acidic residues: residues 920 to 944 (GARE…RDVR), 954 to 1081 (VERR…DSAW), and 1097 to 1117 (TRQD…KEAR).

This sequence belongs to the eIF-3 subunit A family. Component of the eukaryotic translation initiation factor 3 (eIF-3) complex.

It is found in the cytoplasm. RNA-binding component of the eukaryotic translation initiation factor 3 (eIF-3) complex, which is involved in protein synthesis of a specialized repertoire of mRNAs and, together with other initiation factors, stimulates binding of mRNA and methionyl-tRNAi to the 40S ribosome. The eIF-3 complex specifically targets and initiates translation of a subset of mRNAs involved in cell proliferation. The protein is Eukaryotic translation initiation factor 3 subunit A of Aedes aegypti (Yellowfever mosquito).